Here is a 191-residue protein sequence, read N- to C-terminus: Protein Ves (191 aa).

It belongs to the Ves family.

The polypeptide is Protein Ves (Escherichia fergusonii (strain ATCC 35469 / DSM 13698 / CCUG 18766 / IAM 14443 / JCM 21226 / LMG 7866 / NBRC 102419 / NCTC 12128 / CDC 0568-73)).